We begin with the raw amino-acid sequence, 81 residues long: LYR motif-containing protein At3g19508 (81 aa).

It belongs to the complex I LYR family. LYRM9 subfamily.

In Arabidopsis thaliana (Mouse-ear cress), this protein is LYR motif-containing protein At3g19508.